The primary structure comprises 629 residues: Dapper homolog 3 (629 aa).

S6 is modified (phosphoserine). Disordered regions lie at residues P50 to A76 and G105 to V574. The span at E56–A69 shows a compositional bias: acidic residues. Residues A63–P87 are a coiled coil. Over residues G105–G150 the composition is skewed to low complexity. Phosphoserine occurs at positions 165 and 239. R258 is subject to Omega-N-methylarginine. The span at P301–G311 shows a compositional bias: basic and acidic residues. Over residues S316 to E335 the composition is skewed to low complexity. Positions P336–S348 are enriched in pro residues. Phosphoserine occurs at positions 426 and 478. The segment covering S525 to R535 has biased composition (low complexity). The segment covering G536–G546 has biased composition (gly residues). Over residues E547 to D568 the composition is skewed to low complexity. Residues M626–V629 carry the PDZ-binding motif.

It belongs to the dapper family. In terms of assembly, can form homodimers and heterodimers with DACT1 or DACT3. Interacts with CSNK1D, PKA catalytic subunit, PKC-type kinase, DVL1, DVL3, VANGL1, VANGL2 and CTNND1. Interacts with DVL2.

May be involved in regulation of intracellular signaling pathways during development. Specifically thought to play a role in canonical and/or non-canonical Wnt signaling pathways through interaction with DSH (Dishevelled) family proteins. In Homo sapiens (Human), this protein is Dapper homolog 3 (DACT3).